The chain runs to 20 residues: Equinatoxin-3 (20 aa).

Residues 3–12 (AVAGAIIKGA) are plays an important role in the hemolytic activity. The segment at 11-20 (GAALTFNVLQ) is N-terminal region.

The protein belongs to the actinoporin family. Sea anemone subfamily. Octamer or nonamer in membranes. Monomer in the soluble state.

It is found in the secreted. It localises to the nematocyst. Its subcellular location is the target cell membrane. In terms of biological role, pore-forming protein that forms cations-selective hydrophilic pores of around 1 nm and causes cardiac stimulation and cytolysis. Pore formation is a multi-step process that involves specific recognition of membrane sphingomyelin (but neither cholesterol nor phosphatidylcholine) using aromatic rich region and adjacent phosphocholine (POC) binding site, firm binding to the membrane (mainly driven by hydrophobic interactions) accompanied by the transfer of the N-terminal region to the lipid-water interface and finally pore formation after oligomerization of monomers. Cytolytic effects include red blood cells hemolysis, platelet aggregation and lysis, cytotoxic and cytostatic effects on fibroblasts. Lethality in mammals has been ascribed to severe vasospasm of coronary vessels, cardiac arrhythmia, and inotropic effects. The chain is Equinatoxin-3 from Actinia equina (Beadlet anemone).